Consider the following 140-residue polypeptide: Nucleoside diphosphate kinase (140 aa).

The ATP site is built by K10, F58, R86, T92, R103, and N113. The active-site Pros-phosphohistidine intermediate is the H116.

Belongs to the NDK family. As to quaternary structure, homohexamer. The cofactor is Mg(2+).

Its subcellular location is the cytoplasm. It carries out the reaction a 2'-deoxyribonucleoside 5'-diphosphate + ATP = a 2'-deoxyribonucleoside 5'-triphosphate + ADP. It catalyses the reaction a ribonucleoside 5'-diphosphate + ATP = a ribonucleoside 5'-triphosphate + ADP. Major role in the synthesis of nucleoside triphosphates other than ATP. The ATP gamma phosphate is transferred to the NDP beta phosphate via a ping-pong mechanism, using a phosphorylated active-site intermediate. This Methanocaldococcus jannaschii (strain ATCC 43067 / DSM 2661 / JAL-1 / JCM 10045 / NBRC 100440) (Methanococcus jannaschii) protein is Nucleoside diphosphate kinase.